Reading from the N-terminus, the 92-residue chain is Subtilisin inhibitor 1 (92 aa).

Positions 1-12 are enriched in polar residues; sequence QEQGTNPSQEQN. Positions 1–31 are disordered; the sequence is QEQGTNPSQEQNVPLPRNYKQALETNTPTKT.

It belongs to the protease inhibitor I13 (potato type I serine protease inhibitor) family.

Its function is as follows. Inhibitor of subtilisin. The chain is Subtilisin inhibitor 1 from Phaseolus angularis (Azuki bean).